The chain runs to 425 residues: Histone-binding protein RBBP4-B (425 aa).

Ala2 carries the post-translational modification N-acetylalanine. 7 WD repeats span residues Tyr32–Gly125, Glu126–Gly175, His176–Phe223, Gly225–Asp270, Ala271–Glu314, Ser315–Gly371, and Gly372–Met404.

It belongs to the WD repeat RBAP46/RBAP48/MSI1 family. In terms of assembly, binds directly to histone H4, probably via helix 1 of the histone fold, a region that is not accessible when histone H4 is in chromatin. Probably forms a large corepressor complex that contains ncor1, sin3a, hdac1-A and/or hdac1-B, hdac2, rbbp4-A and/or rbbp4-B and possibly rbbp7.

The protein localises to the nucleus. The protein resides in the chromosome. It localises to the telomere. In terms of biological role, core histone-binding subunit that may target chromatin assembly factors, chromatin remodeling factors and histone deacetylases to their histone substrates in a manner that is regulated by nucleosomal DNA. Component of several complexes which regulate chromatin metabolism. The polypeptide is Histone-binding protein RBBP4-B (rbbp4-b) (Xenopus laevis (African clawed frog)).